Reading from the N-terminus, the 61-residue chain is Small ribosomal subunit protein bS21 (61 aa).

The protein belongs to the bacterial ribosomal protein bS21 family.

This is Small ribosomal subunit protein bS21 from Leuconostoc mesenteroides subsp. mesenteroides (strain ATCC 8293 / DSM 20343 / BCRC 11652 / CCM 1803 / JCM 6124 / NCDO 523 / NBRC 100496 / NCIMB 8023 / NCTC 12954 / NRRL B-1118 / 37Y).